The following is a 150-amino-acid chain: Large ribosomal subunit protein eL19 (150 aa).

The segment at 56–90 (RGISSGRLKERKHKRRSKGEGRKHGSRKGKSGART) is disordered.

It belongs to the eukaryotic ribosomal protein eL19 family. Part of the 50S ribosomal subunit.

In terms of biological role, binds to the 23S rRNA. This Sulfolobus acidocaldarius (strain ATCC 33909 / DSM 639 / JCM 8929 / NBRC 15157 / NCIMB 11770) protein is Large ribosomal subunit protein eL19.